Consider the following 515-residue polypeptide: Na(+)/H(+) antiporter NhaB (515 aa).

The next 13 helical transmembrane spans lie at Ile23 to Gly43, Trp44 to Gln64, Ile88 to Met108, Leu119 to Phe139, Phe143 to Val163, Leu202 to Pro222, Phe238 to Val258, Gly303 to Ile323, Gly324 to Gly344, Leu357 to Ile377, Leu389 to Ala409, Ala447 to Ile467, and Met477 to Leu497.

This sequence belongs to the NhaB Na(+)/H(+) (TC 2.A.34) antiporter family.

The protein localises to the cell inner membrane. The catalysed reaction is 2 Na(+)(in) + 3 H(+)(out) = 2 Na(+)(out) + 3 H(+)(in). Its function is as follows. Na(+)/H(+) antiporter that extrudes sodium in exchange for external protons. The polypeptide is Na(+)/H(+) antiporter NhaB (Mannheimia succiniciproducens (strain KCTC 0769BP / MBEL55E)).